A 1465-amino-acid chain; its full sequence is DNA polymerase III PolC-type (1465 aa).

Residues 425–581 (YVVFDVETTG…YDAEATGRLL (157 aa)) enclose the Exonuclease domain.

It belongs to the DNA polymerase type-C family. PolC subfamily.

It localises to the cytoplasm. It catalyses the reaction DNA(n) + a 2'-deoxyribonucleoside 5'-triphosphate = DNA(n+1) + diphosphate. Required for replicative DNA synthesis. This DNA polymerase also exhibits 3' to 5' exonuclease activity. The protein is DNA polymerase III PolC-type of Streptococcus mutans serotype c (strain ATCC 700610 / UA159).